Reading from the N-terminus, the 317-residue chain is Ribosomal protein L11 methyltransferase (317 aa).

S-adenosyl-L-methionine-binding residues include Thr158, Gly179, Asp201, and Asn244.

The protein belongs to the methyltransferase superfamily. PrmA family.

It localises to the cytoplasm. The enzyme catalyses L-lysyl-[protein] + 3 S-adenosyl-L-methionine = N(6),N(6),N(6)-trimethyl-L-lysyl-[protein] + 3 S-adenosyl-L-homocysteine + 3 H(+). In terms of biological role, methylates ribosomal protein L11. The protein is Ribosomal protein L11 methyltransferase of Streptococcus equi subsp. equi (strain 4047).